Here is a 314-residue protein sequence, read N- to C-terminus: Serine/threonine-protein phosphatase CPPED1 (314 aa).

The residue at position 2 (Ser-2) is a Phosphoserine. The segment at 47–250 (KAWSTGDCDN…KVVFSGHYHR (204 aa)) is catalytic. Residues Asp-53, Asp-90, Asn-127, and His-247 each contribute to the a divalent metal cation site. Phosphoserine is present on Ser-294.

This sequence belongs to the metallophosphoesterase superfamily. CPPED1 family. A divalent metal cation is required as a cofactor.

The protein localises to the cytoplasm. The catalysed reaction is O-phospho-L-seryl-[protein] + H2O = L-seryl-[protein] + phosphate. It catalyses the reaction O-phospho-L-threonyl-[protein] + H2O = L-threonyl-[protein] + phosphate. In terms of biological role, protein phosphatase that dephosphorylates AKT family kinase specifically at 'Ser-473', blocking cell cycle progression and promoting cell apoptosis. May play an inhibitory role in glucose uptake by adipocytes. This is Serine/threonine-protein phosphatase CPPED1 (CPPED1) from Pongo abelii (Sumatran orangutan).